A 108-amino-acid polypeptide reads, in one-letter code: UPF0060 membrane protein SA2130 (108 aa).

A run of 4 helical transmembrane segments spans residues 5–25 (IFIF…IWLW), 31–51 (SSLV…IATF), 60–80 (VYAA…MVVD), and 86–106 (KYDV…LLPS).

It belongs to the UPF0060 family.

Its subcellular location is the cell membrane. The sequence is that of UPF0060 membrane protein SA2130 from Staphylococcus aureus (strain N315).